Reading from the N-terminus, the 2259-residue chain is Golgin subfamily A member 4 (2259 aa).

The disordered stretch occupies residues 1–54 (MFKKLKQKISEEQQQLQQALAPAQASSSSSTPTRTRSRTSSFTDQLDDATPNRE). S10 is subject to Phosphoserine. Residues 12–41 (EQQQLQQALAPAQASSSSSTPTRTRSRTSS) are compositionally biased toward low complexity. T39 bears the Phosphothreonine mark. A phosphoserine mark is found at S41, S104, and S111. Positions 165 to 235 (SLSREQLLQR…EELQMDQQAK (71 aa)) are interaction with MACF1. Residues 167-2182 (SREQLLQRLR…SYEKSVCAAA (2016 aa)) adopt a coiled-coil conformation. 2 stretches are compositionally biased toward basic and acidic residues: residues 1932–1946 (LEDR…HVIE) and 1954–1977 (DGRH…LSKE). Positions 1932–1977 (LEDRPEENSKSHVIESKLGTPMDGRHSDLESKLAGSEREKQKLSKE) are disordered. Residues 2199-2246 (LFGEPTEFEYLRKVLFEYMMGRETKTMAKVITTVLRFPDDQAQKILER) enclose the GRIP domain.

As to quaternary structure, homodimer. Interacts with GTP-bound ARL1 and ARL3. Interacts with MACF1. Directly interacts with TBC1D23. Interacts with FAM91A1; this interaction may be mediated by TBC1D23. As to expression, expressed in the head of epididymal sperm but not in testicular sperm (at protein level).

The protein localises to the cytoplasm. The protein resides in the golgi apparatus membrane. It localises to the golgi apparatus. Its subcellular location is the trans-Golgi network membrane. Functionally, involved in vesicular trafficking at the Golgi apparatus level. May play a role in delivery of transport vesicles containing GPI-linked proteins from the trans-Golgi network through its interaction with MACF1. Involved in endosome-to-Golgi trafficking. The polypeptide is Golgin subfamily A member 4 (Rattus norvegicus (Rat)).